The chain runs to 365 residues: 2-aminoethylphosphonate--pyruvate transaminase (365 aa).

N6-(pyridoxal phosphate)lysine is present on lysine 194.

Belongs to the class-V pyridoxal-phosphate-dependent aminotransferase family. PhnW subfamily. In terms of assembly, homodimer. Pyridoxal 5'-phosphate serves as cofactor.

It catalyses the reaction (2-aminoethyl)phosphonate + pyruvate = phosphonoacetaldehyde + L-alanine. Functionally, involved in phosphonate degradation. This is 2-aminoethylphosphonate--pyruvate transaminase from Bacillus cereus (strain 03BB102).